Reading from the N-terminus, the 82-residue chain is Large ribosomal subunit protein bL27 (82 aa).

The tract at residues 1–21 (MAHKKGASSSRNGRDSNAKRL) is disordered.

Belongs to the bacterial ribosomal protein bL27 family.

The polypeptide is Large ribosomal subunit protein bL27 (Tropheryma whipplei (strain TW08/27) (Whipple's bacillus)).